A 372-amino-acid chain; its full sequence is tRNA-specific 2-thiouridylase MnmA (372 aa).

Residues 11–18 and Met-37 each bind ATP; that span reads GMSGGVDS. The segment at 97–99 is interaction with target base in tRNA; the sequence is NPD. The active-site Nucleophile is Cys-102. Cysteines 102 and 199 form a disulfide. Gly-126 serves as a coordination point for ATP. Residues 149-151 are interaction with tRNA; sequence KDQ. Catalysis depends on Cys-199, which acts as the Cysteine persulfide intermediate. The interval 309–310 is interaction with tRNA; that stretch reads RY.

Belongs to the MnmA/TRMU family.

It is found in the cytoplasm. The enzyme catalyses S-sulfanyl-L-cysteinyl-[protein] + uridine(34) in tRNA + AH2 + ATP = 2-thiouridine(34) in tRNA + L-cysteinyl-[protein] + A + AMP + diphosphate + H(+). In terms of biological role, catalyzes the 2-thiolation of uridine at the wobble position (U34) of tRNA, leading to the formation of s(2)U34. This chain is tRNA-specific 2-thiouridylase MnmA, found in Staphylococcus aureus (strain Mu50 / ATCC 700699).